A 130-amino-acid chain; its full sequence is Large ribosomal subunit protein bL12 (130 aa).

Belongs to the bacterial ribosomal protein bL12 family. In terms of assembly, homodimer. Part of the ribosomal stalk of the 50S ribosomal subunit. Forms a multimeric L10(L12)X complex, where L10 forms an elongated spine to which 2 to 4 L12 dimers bind in a sequential fashion. Binds GTP-bound translation factors.

Forms part of the ribosomal stalk which helps the ribosome interact with GTP-bound translation factors. Is thus essential for accurate translation. The chain is Large ribosomal subunit protein bL12 from Synechococcus sp. (strain WH7803).